A 485-amino-acid polypeptide reads, in one-letter code: Ribosomal protein S6 kinase beta-2 (485 aa).

The interval 1 to 26 (MAAVFDLDLETEEGSEGEGEPEFSPA) is disordered. A compositionally biased stretch (acidic residues) spans 7 to 21 (LDLETEEGSEGEGEP). Position 15 is a phosphoserine (S15). The Protein kinase domain maps to 67-328 (FELLSVLGKG…AADVQRHPFF (262 aa)). ATP-binding positions include 73–81 (LGKGGYGKV) and K99. The active-site Proton acceptor is D194. The AGC-kinase C-terminal domain maps to 329-399 (RHINWDDLLA…VAPSVLDSIK (71 aa)). The interval 407 to 485 (KLRSPRRLNS…SKKGRGRSGR (79 aa)) is disordered. S417 bears the Phosphoserine mark. T420 carries the post-translational modification Phosphothreonine. Residue S423 is modified to Phosphoserine. Pro residues predominate over residues 436-469 (SPGPPEPMEPSLPPLLPSPPSPPPTSTAPLPIRP). The Nuclear localization signal signature appears at 474-480 (KKSKKGR). Positions 474–485 (KKSKKGRGRSGR) are enriched in basic residues. S476 is modified (phosphoserine; by PKC).

This sequence belongs to the protein kinase superfamily. AGC Ser/Thr protein kinase family. S6 kinase subfamily. Phosphorylated and activated by MTOR. Phosphorylation by PKC within the NLS in response to mitogenic stimuli causes cytoplasmic retention.

The protein localises to the cytoplasm. It localises to the nucleus. The catalysed reaction is L-seryl-[protein] + ATP = O-phospho-L-seryl-[protein] + ADP + H(+). The enzyme catalyses L-threonyl-[protein] + ATP = O-phospho-L-threonyl-[protein] + ADP + H(+). Its function is as follows. Phosphorylates specifically ribosomal protein S6. Seems to act downstream of mTOR signaling in response to growth factors and nutrients to promote cell proliferation, cell growth and cell cycle progression in an alternative pathway regulated by MEAK7. This Mus musculus (Mouse) protein is Ribosomal protein S6 kinase beta-2 (Rps6kb2).